A 794-amino-acid polypeptide reads, in one-letter code: FT-interacting protein 1 (794 aa).

The segment covering 1 to 27 (MAAKDGAKSQEDYKLKDMKPELGERWP) has biased composition (basic and acidic residues). The disordered stretch occupies residues 1-34 (MAAKDGAKSQEDYKLKDMKPELGERWPHGGQRGG). 3 C2 domains span residues 37–158 (WIGS…PQWY), 198–321 (VQGE…SKWY), and 364–492 (YISD…THSY). The Ca(2+) site is built by Asp76, Asp123, Glu125, and Glu131. 4 helical membrane-spanning segments follow: residues 510-532 (LAVR…PLLP), 595-615 (IVSV…VCYW), 619-639 (LTTI…ELIL), and 737-757 (LFVI…FKII).

The protein belongs to the MCTP family. Interacts with FT in phloem companion cells. Ca(2+) is required as a cofactor. In terms of tissue distribution, expressed in the vascular tissues of roots, cotyledons and rosette leaves. Specifically located in the phloem including companion cells. Observed in flowers. Not detected in the shoot apical meristem.

The protein localises to the endoplasmic reticulum membrane. It is found in the cell junction. Its subcellular location is the plasmodesma. Its function is as follows. Involved in the export of FT from the phloem companion cells to the sieve elements through the plasmodesmata. Regulates flowering time under long days. May function as a signaling molecule by regulating the trafficking of other regulators. The polypeptide is FT-interacting protein 1 (Arabidopsis thaliana (Mouse-ear cress)).